Reading from the N-terminus, the 31-residue chain is Branched-chain-amino-acid aminotransferase, mitochondrial (31 aa).

A mitochondrion-targeting transit peptide spans 1–27; the sequence is MAAAALRQIWARKFLPVPWLLCGPRRY.

It belongs to the class-IV pyridoxal-phosphate-dependent aminotransferase family. Homodimer. It depends on pyridoxal 5'-phosphate as a cofactor.

Its subcellular location is the mitochondrion. The catalysed reaction is L-leucine + 2-oxoglutarate = 4-methyl-2-oxopentanoate + L-glutamate. It carries out the reaction L-isoleucine + 2-oxoglutarate = (S)-3-methyl-2-oxopentanoate + L-glutamate. It catalyses the reaction L-valine + 2-oxoglutarate = 3-methyl-2-oxobutanoate + L-glutamate. Functionally, catalyzes the first reaction in the catabolism of the essential branched chain amino acids leucine, isoleucine, and valine. May also function as a transporter of branched chain alpha-keto acids. The polypeptide is Branched-chain-amino-acid aminotransferase, mitochondrial (BCAT2) (Sus scrofa (Pig)).